We begin with the raw amino-acid sequence, 463 residues long: Zinc finger protein PLAGL1 (463 aa).

7 consecutive C2H2-type zinc fingers follow at residues 4-26 (YPCQ…NYSH), 32-56 (YKCL…MATH), 62-84 (HQCA…LQTH), 91-113 (FGCE…LALH), 120-142 (LTCG…LKAH), 156-178 (HQCD…LVVH), and 184-207 (FLCQ…KKTH). Residues 285 to 310 (LHPVAPPTSPPQPLQNHKYNTSSTSY) form a disordered region. The span at 287-297 (PVAPPTSPPQP) shows a compositional bias: pro residues. A compositionally biased stretch (polar residues) spans 298-310 (LQNHKYNTSSTSY).

Belongs to the krueppel C2H2-type zinc-finger protein family. Interacts with THRSP.

The protein localises to the nucleus. Functionally, acts as a transcriptional activator. Involved in the transcriptional regulation of type 1 receptor for pituitary adenylate cyclase-activating polypeptide. The polypeptide is Zinc finger protein PLAGL1 (PLAGL1) (Sus scrofa (Pig)).